Here is a 174-residue protein sequence, read N- to C-terminus: Shikimate kinase 2 (174 aa).

12-17 provides a ligand contact to ATP; the sequence is GAGKTT. 2 residues coordinate Mg(2+): Thr-16 and Asp-32. Substrate-binding residues include Asp-34, Arg-58, and Gly-79. The LID domain stretch occupies residues 112–126; that stretch reads AEDPEDAQRPSLTGK. Arg-120 provides a ligand contact to ATP. Residue Arg-139 coordinates substrate. Residue Gln-155 participates in ATP binding.

Belongs to the shikimate kinase family. AroL subfamily. In terms of assembly, monomer. It depends on Mg(2+) as a cofactor.

Its subcellular location is the cytoplasm. The catalysed reaction is shikimate + ATP = 3-phosphoshikimate + ADP + H(+). It functions in the pathway metabolic intermediate biosynthesis; chorismate biosynthesis; chorismate from D-erythrose 4-phosphate and phosphoenolpyruvate: step 5/7. Catalyzes the specific phosphorylation of the 3-hydroxyl group of shikimic acid using ATP as a cosubstrate. The chain is Shikimate kinase 2 from Yersinia enterocolitica serotype O:8 / biotype 1B (strain NCTC 13174 / 8081).